Consider the following 208-residue polypeptide: Dephospho-CoA kinase (208 aa).

The region spanning 3 to 208 (EIGLTGGIGS…ALSAAGVTQA (206 aa)) is the DPCK domain. Position 11-16 (11-16 (GSGKTR)) interacts with ATP.

This sequence belongs to the CoaE family.

It localises to the cytoplasm. The catalysed reaction is 3'-dephospho-CoA + ATP = ADP + CoA + H(+). Its pathway is cofactor biosynthesis; coenzyme A biosynthesis; CoA from (R)-pantothenate: step 5/5. In terms of biological role, catalyzes the phosphorylation of the 3'-hydroxyl group of dephosphocoenzyme A to form coenzyme A. In Cupriavidus pinatubonensis (strain JMP 134 / LMG 1197) (Cupriavidus necator (strain JMP 134)), this protein is Dephospho-CoA kinase.